The chain runs to 169 residues: Protein UL138 (169 aa).

The helical transmembrane segment at 8–28 (VGLPIIGVMLVLIVAILCYLA) threads the bilayer. The disordered stretch occupies residues 109–133 (DRRAGSSSSSSVHVANQRNSVPPPD).

As to quaternary structure, interacts with host TNFR1. Interacts with host MRP1. Interacts with host UAF1/WDR48. Interacts with host STING1.

The protein localises to the host Golgi apparatus membrane. Plays an important role in the establishment of latent viral infection. Modulates the expression of several host cell surface receptors such as TNFR1, CD36 or the MRP1 transporter during productive infection. For instance, associates with host MRP1 and induces its lysosomal degradation. Plays an inhibitory role in the host cGAS/STING/TBK1 pathway and upstream of IRF3 phosphorylation and NF-kappa-B leading to inhibition of interferon beta production during both lytic and latent infections. Also participates in the establishment of latency by sustaining an innate immune response through phosphorylation and activation of host STAT1. The chain is Protein UL138 (UL138) from Human cytomegalovirus (strain Merlin) (HHV-5).